The sequence spans 118 residues: Aspartate 1-decarboxylase (118 aa).

The active-site Schiff-base intermediate with substrate; via pyruvic acid is Ser-25. Ser-25 is modified (pyruvic acid (Ser)). Thr-57 contributes to the substrate binding site. The Proton donor role is filled by Tyr-58. 73-75 (GAA) is a substrate binding site.

This sequence belongs to the PanD family. In terms of assembly, heterooctamer of four alpha and four beta subunits. Pyruvate serves as cofactor. In terms of processing, is synthesized initially as an inactive proenzyme, which is activated by self-cleavage at a specific serine bond to produce a beta-subunit with a hydroxyl group at its C-terminus and an alpha-subunit with a pyruvoyl group at its N-terminus.

The protein localises to the cytoplasm. The enzyme catalyses L-aspartate + H(+) = beta-alanine + CO2. It functions in the pathway cofactor biosynthesis; (R)-pantothenate biosynthesis; beta-alanine from L-aspartate: step 1/1. In terms of biological role, catalyzes the pyruvoyl-dependent decarboxylation of aspartate to produce beta-alanine. This chain is Aspartate 1-decarboxylase, found in Hyphomonas neptunium (strain ATCC 15444).